The chain runs to 447 residues: ATP-dependent protease ATPase subunit HslU (447 aa).

Residues I18, 60-65, D259, E325, and R397 each bind ATP; that span reads GVGKTE.

The protein belongs to the ClpX chaperone family. HslU subfamily. In terms of assembly, a double ring-shaped homohexamer of HslV is capped on each side by a ring-shaped HslU homohexamer. The assembly of the HslU/HslV complex is dependent on binding of ATP.

The protein localises to the cytoplasm. Its function is as follows. ATPase subunit of a proteasome-like degradation complex; this subunit has chaperone activity. The binding of ATP and its subsequent hydrolysis by HslU are essential for unfolding of protein substrates subsequently hydrolyzed by HslV. HslU recognizes the N-terminal part of its protein substrates and unfolds these before they are guided to HslV for hydrolysis. The sequence is that of ATP-dependent protease ATPase subunit HslU from Burkholderia pseudomallei (strain K96243).